Here is a 255-residue protein sequence, read N- to C-terminus: L-seryl-tRNA(Sec) kinase (255 aa).

7–14 serves as a coordination point for ATP; that stretch reads GLPSVGKS.

The protein belongs to the L-seryl-tRNA(Sec) kinase family.

It carries out the reaction L-seryl-tRNA(Sec) + ATP = O-phospho-L-seryl-tRNA(Sec) + ADP. It participates in aminoacyl-tRNA biosynthesis; selenocysteinyl-tRNA(Sec) biosynthesis; selenocysteinyl-tRNA(Sec) from L-seryl-tRNA(Sec) (archaeal/eukaryal route): step 1/2. Functionally, specifically phosphorylates seryl-tRNA(Sec) to O-phosphoseryl-tRNA(Sec), an activated intermediate for selenocysteine biosynthesis. The sequence is that of L-seryl-tRNA(Sec) kinase (pstK) from Methanococcus maripaludis (strain DSM 14266 / JCM 13030 / NBRC 101832 / S2 / LL).